A 97-amino-acid chain; its full sequence is Large ribosomal subunit protein bL27 (97 aa).

The segment at 14–36 is disordered; the sequence is HKKGGGSTSNGRDSQAKRLGAKA.

Belongs to the bacterial ribosomal protein bL27 family.

This is Large ribosomal subunit protein bL27 from Streptococcus sanguinis (strain SK36).